Here is a 267-residue protein sequence, read N- to C-terminus: Diphthine--ammonia ligase (267 aa).

Tyrosine 97 is modified (phosphotyrosine).

This sequence belongs to the Diphthine--ammonia ligase family.

It catalyses the reaction diphthine-[translation elongation factor 2] + NH4(+) + ATP = diphthamide-[translation elongation factor 2] + AMP + diphosphate + H(+). It functions in the pathway protein modification; peptidyl-diphthamide biosynthesis. In terms of biological role, amidase that catalyzes the last step of diphthamide biosynthesis using ammonium and ATP. Diphthamide biosynthesis consists in the conversion of an L-histidine residue in the translation elongation factor eEF-2 (EEF2) to diphthamide. The polypeptide is Diphthine--ammonia ligase (DPH6) (Bos taurus (Bovine)).